The following is a 246-amino-acid chain: DNA repair protein RecO (246 aa).

This sequence belongs to the RecO family.

Functionally, involved in DNA repair and RecF pathway recombination. This Cutibacterium acnes (strain DSM 16379 / KPA171202) (Propionibacterium acnes) protein is DNA repair protein RecO.